We begin with the raw amino-acid sequence, 251 residues long: Zwei Ig domain protein zig-3 (251 aa).

Residues 1-19 (MLLICISVLAAISAHPLSS) form the signal peptide. Ig-like C2-type domains lie at 42-144 (PSLK…AKIS) and 160-244 (PVIT…TFLY). Intrachain disulfides connect cysteine 65–cysteine 128 and cysteine 181–cysteine 228.

Expressed in PVT, AIM and ASI neurons, in vulva and weakly in body wall muscles.

It is found in the secreted. In terms of biological role, required for maintaining axon position of PVQ and PVP neurons postembryonically in the ventral nerve cord (VNC) by preventing axons drifting into the opposite side of the VNC that could occur during body growth and movement. The polypeptide is Zwei Ig domain protein zig-3 (Caenorhabditis elegans).